The primary structure comprises 483 residues: Altronate oxidoreductase (483 aa).

18-29 (IIQFGEGNFLRA) contacts NAD(+).

The protein belongs to the mannitol dehydrogenase family. UxaB subfamily.

It carries out the reaction D-altronate + NAD(+) = keto-D-tagaturonate + NADH + H(+). It functions in the pathway carbohydrate metabolism; pentose and glucuronate interconversion. In Cronobacter sakazakii (strain ATCC BAA-894) (Enterobacter sakazakii), this protein is Altronate oxidoreductase.